Here is a 909-residue protein sequence, read N- to C-terminus: Cutinase transcription factor 1 alpha (909 aa).

Positions 1–51 are disordered; sequence MSSGDAPPQAQPQPHQQEQPNQRQSSTPAPSAAPVPPAPSTSTSNSAGGVS. Residues 12-30 are compositionally biased toward low complexity; the sequence is PQPHQQEQPNQRQSSTPAP. A DNA-binding region (zn(2)-C6 fungal-type) is located at residues 61–90; that stretch reads CETCHARKVRCDAASLGVPCTNCVAFQIEC. Disordered regions lie at residues 95–159, 651–757, and 841–878; these read PKRK…EAQA, AEGK…SFSV, and LPQGFQGHTNMWQPNLDPNLPEGQSPDSWSSTSGQGQA. Residues 110 to 119 show a composition bias toward basic and acidic residues; it reads KDSDSDRGDG. Polar residues predominate over residues 142 to 156; the sequence is VFHSHNGTPPTTLTE. The span at 669–683 shows a compositional bias: basic and acidic residues; the sequence is QHSRQQEAPKRKYDE. 3 stretches are compositionally biased toward polar residues: residues 704–717, 737–755, and 865–878; these read PQTPSAVKAETSSM, GGTNSRPQTRPATPFNPSF, and SPDSWSSTSGQGQA.

It is found in the nucleus. The protein is Cutinase transcription factor 1 alpha (CTF1-ALPHA) of Fusarium vanettenii (Neocosmospora pisi).